The sequence spans 315 residues: Cytochrome f (315 aa).

The first 36 residues, 1 to 36 (MKQSLLSVLTKKSLRLLAALFLVVTSVFSLPQAAQA), serve as a signal peptide directing secretion. Residues Phe37, Cys57, Cys60, and His61 each coordinate heme. The helical transmembrane segment at 281 to 301 (IKWLMVFFSAIMISQTLLVLK) threads the bilayer.

This sequence belongs to the cytochrome f family. As to quaternary structure, the 4 large subunits of the cytochrome b6-f complex are cytochrome b6, subunit IV (17 kDa polypeptide, PetD), cytochrome f and the Rieske protein, while the 4 small subunits are PetG, PetL, PetM and PetN. The complex functions as a dimer. The cofactor is heme.

Its subcellular location is the cellular thylakoid membrane. Its function is as follows. Component of the cytochrome b6-f complex, which mediates electron transfer between photosystem II (PSII) and photosystem I (PSI), cyclic electron flow around PSI, and state transitions. This Acaryochloris marina (strain MBIC 11017) protein is Cytochrome f.